A 158-amino-acid polypeptide reads, in one-letter code: Putative zinc-binding protein ORF9 (158 aa).

Residues 72–111 (CPVCGRAVVGPTVREACGHVTCNACETEACAVDRLCIGGG) form an RING-type; degenerate zinc finger. Residues 126 to 158 (GPRWRGPRPTRPEAHEAVQRSRGSSEDACTCAP) are disordered. A compositionally biased stretch (basic and acidic residues) spans 135–150 (TRPEAHEAVQRSRGSS).

This is Putative zinc-binding protein ORF9 (ORF9) from Ictalurid herpesvirus 1 (strain Auburn) (IcHV-1).